A 273-amino-acid polypeptide reads, in one-letter code: Dermonecrotic toxin LdSicTox-alphaIB3aiv (273 aa).

The active site involves His-5. Mg(2+)-binding residues include Glu-25 and Asp-27. Residue His-41 is the Nucleophile of the active site. Cystine bridges form between Cys-45–Cys-51 and Cys-47–Cys-190. Position 85 (Asp-85) interacts with Mg(2+).

This sequence belongs to the arthropod phospholipase D family. Class II subfamily. Mg(2+) is required as a cofactor. Expressed by the venom gland.

It is found in the secreted. The catalysed reaction is an N-(acyl)-sphingosylphosphocholine = an N-(acyl)-sphingosyl-1,3-cyclic phosphate + choline. It carries out the reaction an N-(acyl)-sphingosylphosphoethanolamine = an N-(acyl)-sphingosyl-1,3-cyclic phosphate + ethanolamine. The enzyme catalyses a 1-acyl-sn-glycero-3-phosphocholine = a 1-acyl-sn-glycero-2,3-cyclic phosphate + choline. It catalyses the reaction a 1-acyl-sn-glycero-3-phosphoethanolamine = a 1-acyl-sn-glycero-2,3-cyclic phosphate + ethanolamine. Its function is as follows. Dermonecrotic toxins cleave the phosphodiester linkage between the phosphate and headgroup of certain phospholipids (sphingolipid and lysolipid substrates), forming an alcohol (often choline) and a cyclic phosphate. This toxin acts on sphingomyelin (SM). It may also act on ceramide phosphoethanolamine (CPE), lysophosphatidylcholine (LPC) and lysophosphatidylethanolamine (LPE), but not on lysophosphatidylserine (LPS), and lysophosphatidylglycerol (LPG). It acts by transphosphatidylation, releasing exclusively cyclic phosphate products as second products. Induces dermonecrosis, hemolysis, increased vascular permeability, edema, inflammatory response, and platelet aggregation. The chain is Dermonecrotic toxin LdSicTox-alphaIB3aiv from Loxosceles deserta (Desert recluse spider).